The primary structure comprises 157 residues: Large ribosomal subunit protein uL15 (157 aa).

This sequence belongs to the universal ribosomal protein uL15 family. As to quaternary structure, part of the 50S ribosomal subunit.

In terms of biological role, binds to the 23S rRNA. This chain is Large ribosomal subunit protein uL15, found in Ehrlichia ruminantium (strain Welgevonden).